Reading from the N-terminus, the 477-residue chain is Adenosylhomocysteinase (477 aa).

Residues threonine 63, aspartate 142, and glutamate 202 each contribute to the substrate site. 203–205 (TTT) provides a ligand contact to NAD(+). Substrate-binding residues include lysine 232 and aspartate 236. NAD(+) is bound by residues asparagine 237, 266-271 (GYGDVG), glutamate 289, asparagine 324, 345-347 (IGH), and asparagine 390.

It belongs to the adenosylhomocysteinase family. It depends on NAD(+) as a cofactor.

Its subcellular location is the cytoplasm. It carries out the reaction S-adenosyl-L-homocysteine + H2O = L-homocysteine + adenosine. Its pathway is amino-acid biosynthesis; L-homocysteine biosynthesis; L-homocysteine from S-adenosyl-L-homocysteine: step 1/1. Its function is as follows. May play a key role in the regulation of the intracellular concentration of adenosylhomocysteine. The protein is Adenosylhomocysteinase of Methylibium petroleiphilum (strain ATCC BAA-1232 / LMG 22953 / PM1).